We begin with the raw amino-acid sequence, 272 residues long: Probable nitrilase C965.09 (272 aa).

The region spanning 3-244 (ANIACVQMAP…EGVISYTVDL (242 aa)) is the CN hydrolase domain. Glu-45 (proton acceptor) is an active-site residue. Lys-118 acts as the Proton donor in catalysis. The active-site Nucleophile is the Cys-150.

It belongs to the carbon-nitrogen hydrolase superfamily.

The protein localises to the cytoplasm. It localises to the nucleus. This chain is Probable nitrilase C965.09, found in Schizosaccharomyces pombe (strain 972 / ATCC 24843) (Fission yeast).